A 73-amino-acid polypeptide reads, in one-letter code: Large ribosomal subunit protein bL31 (73 aa).

Residues cysteine 16, cysteine 18, cysteine 37, and cysteine 40 each contribute to the Zn(2+) site.

It belongs to the bacterial ribosomal protein bL31 family. Type A subfamily. Part of the 50S ribosomal subunit. It depends on Zn(2+) as a cofactor.

Binds the 23S rRNA. The sequence is that of Large ribosomal subunit protein bL31 from Pseudomonas savastanoi pv. phaseolicola (strain 1448A / Race 6) (Pseudomonas syringae pv. phaseolicola (strain 1448A / Race 6)).